The sequence spans 416 residues: 3-phosphoshikimate 1-carboxyvinyltransferase (416 aa).

Residues K20, S21, and R25 each contribute to the 3-phosphoshikimate site. Residue K20 coordinates phosphoenolpyruvate. 2 residues coordinate phosphoenolpyruvate: G88 and R116. 6 residues coordinate 3-phosphoshikimate: S159, S160, Q161, S186, D300, and K327. Phosphoenolpyruvate is bound at residue Q161. D300 serves as the catalytic Proton acceptor. The phosphoenolpyruvate site is built by R331 and R373.

The protein belongs to the EPSP synthase family. Monomer.

The protein localises to the cytoplasm. It carries out the reaction 3-phosphoshikimate + phosphoenolpyruvate = 5-O-(1-carboxyvinyl)-3-phosphoshikimate + phosphate. It functions in the pathway metabolic intermediate biosynthesis; chorismate biosynthesis. Functionally, catalyzes the transfer of the enolpyruvyl moiety of phosphoenolpyruvate (PEP) to the 5-hydroxyl of shikimate-3-phosphate (S3P) to produce enolpyruvyl shikimate-3-phosphate and inorganic phosphate. This is 3-phosphoshikimate 1-carboxyvinyltransferase from Archaeoglobus fulgidus (strain ATCC 49558 / DSM 4304 / JCM 9628 / NBRC 100126 / VC-16).